We begin with the raw amino-acid sequence, 224 residues long: Precorrin-2 dehydrogenase (224 aa).

Residues 26 to 27 (SV) and 47 to 50 (EFSQ) each bind NAD(+).

It belongs to the precorrin-2 dehydrogenase / sirohydrochlorin ferrochelatase family. As to quaternary structure, homodimer.

The enzyme catalyses precorrin-2 + NAD(+) = sirohydrochlorin + NADH + 2 H(+). Its pathway is porphyrin-containing compound metabolism; siroheme biosynthesis; sirohydrochlorin from precorrin-2: step 1/1. Functionally, involved in the archaeal biosynthesis of heme. Catalyzes the oxiation of precorrin-2 into sirohydroclorin. In Methanosarcina barkeri (strain Fusaro / DSM 804), this protein is Precorrin-2 dehydrogenase.